Here is a 1235-residue protein sequence, read N- to C-terminus: Insulin receptor substrate 1 (1235 aa).

Ser-3 is subject to Phosphoserine. Residues 3-133 (SPPDTDGFSD…AGGGCGGSCS (131 aa)) are mediates interaction with PHIP. Residues 12–115 (DVRKVGYLRK…WYQALLQLHN (104 aa)) enclose the PH domain. Ser-99 bears the Phosphoserine; by CK2 mark. One can recognise an IRS-type PTB domain in the interval 155 to 259 (FKEVWQVILK…EAMRAMSDEF (105 aa)). The segment at 258-425 (EFRPRTKSQS…SDGGFISSDE (168 aa)) is disordered. Phosphoserine; by RPS6KB1 occurs at positions 265 and 302. Residues 265–276 (SQSSSSCSNPIS) are compositionally biased toward low complexity. Ser-307 is modified (phosphoserine; by IKKB, MAPK8 and RPS6KB1). Phosphoserine occurs at positions 318, 325, 340, and 343. Over residues 349–358 (THAHRHRGSS) the composition is skewed to basic residues. Low complexity-rich tracts occupy residues 378–399 (SPSA…GSTS) and 407–419 (SSAS…SDGG). Ser-414 carries the post-translational modification Phosphoserine. Residues Thr-441 and Thr-448 each carry the phosphothreonine modification. The residue at position 460 (Tyr-460) is a Phosphotyrosine; by INSR. The YXXM motif 1 motif lies at 460-463 (YICM). The residue at position 502 (Thr-502) is a Phosphothreonine; by CK2. A disordered region spans residues 520–539 (THSAGTSPTISHQKTPSQSS). A Phosphoserine; by RPS6KB1 modification is found at Ser-522. Polar residues predominate over residues 522–539 (SAGTSPTISHQKTPSQSS). Short sequence motifs (YXXM motif) lie at residues 546-549 (YTEM) and 608-611 (YMPM). Residue Tyr-608 is modified to Phosphotyrosine; by INSR. At Ser-612 the chain carries Phosphoserine. At Tyr-628 the chain carries Phosphotyrosine; by INSR. The YXXM motif 4 motif lies at 628–631 (YMPM). Ser-632 is modified (phosphoserine; by RPS6KB1 and ROCK2). Residue Tyr-658 is modified to Phosphotyrosine. The short motif at 658–661 (YMMM) is the YXXM motif 5 element. Over residues 669 to 689 (PDIGGGSCSSSSISAAPSGSS) the composition is skewed to low complexity. Residues 669 to 720 (PDIGGGSCSSSSISAAPSGSSYGKPWTNGVGGHHTHALPHAKPPVESGGGKL) are disordered. Residues 727 to 730 (YMNM) carry the YXXM motif 6 motif. The tract at residues 766–921 (FKHTQRPGEP…ATSRSSPSVR (156 aa)) is disordered. The span at 771 to 780 (RPGEPEEGAR) shows a compositional bias: basic and acidic residues. Low complexity-rich tracts occupy residues 785-794 (RLSSSSGRLR), 801-810 (DSSSSTSSDS), and 872-881 (QQQQQQQQQQ). Ser-789 carries the phosphoserine; by AMPK and SIK2 modification. Ser-891 carries the post-translational modification Phosphoserine. Phosphotyrosine; by INSR occurs at positions 895, 939, and 987. Residues 895 to 897 (YVN) form a GRB2-binding region. 3 short sequence motifs (YXXM motif) span residues 939–942 (YMNM), 987–990 (YMTM), and 1010–1013 (YADM). A disordered region spans residues 1024–1165 (LPRTTGAAPP…SAPGCGAAGG (142 aa)). Residues 1025-1046 (PRTTGAAPPPSSTASASASVTP) show a composition bias toward low complexity. Residues 1072–1084 (TRVNLSPNHNQSA) show a composition bias toward polar residues. Ser-1099 is subject to Phosphoserine. Ser-1100 is subject to Phosphoserine; by RPS6KB1. The segment covering 1101-1114 (ETFSAPTRAANTVS) has biased composition (polar residues). A compositionally biased stretch (gly residues) spans 1118 to 1128 (GAAGGGSGGGS). Phosphotyrosine; by INSR is present on Tyr-1172. The disordered stretch occupies residues 1177–1235 (LVKDVKQHPQDCPSQQQSLPPPPPHQPLGSNEGSSPRRSSEDLSTYASINFQKQPEDRQ). A Glycyl lysine isopeptide (Lys-Gly) (interchain with G-Cter in ubiquitin) cross-link involves residue Lys-1179. Polar residues predominate over residues 1204-1229 (LGSNEGSSPRRSSEDLSTYASINFQK). At Tyr-1222 the chain carries Phosphotyrosine; by INSR.

As to quaternary structure, interacts with SOCS7. Interacts (via IRS-type PTB domain) with IGF1R and INSR (via the tyrosine-phosphorylated NPXY motif). Interacts with UBTF, FER and PIK3CA. Interacts (via phosphorylated YXXM motifs) with PIK3R1. Interacts with ROCK1. Interacts (via PH domain) with PHIP. Interacts with GRB2. Interacts with ALK. Interacts with EIF2AK2/PKR. Interacts with GKAP1. Interacts with DGKZ in the absence of insulin; insulin stimulation decreases this interaction. Found in a ternary complex with DGKZ and PIP5K1A in the absence of insulin stimulation. Interacts with SQSTM1; the interaction is disrupted by the presence of tensin TNS2. Interacts with NCK1 (via SH2 domain). Interacts with NCK2 (via SH3 domain). Interacts with SH2B1; this interaction enhances leptin-induced activation of the PI3-kinase pathway. Interacts with DVL2; this interaction promotes the Wnt/beta-catenin signaling pathway. Interacts with JAK1. Post-translationally, serine phosphorylation of IRS1 is a mechanism for insulin resistance. Ser-307 phosphorylation inhibits insulin action through disruption of IRS1 interaction with the insulin receptor, and Ser-789 phosphorylation is increased in the liver of insulin-resistant rats. Phosphorylation of Tyr-895 is required for GRB2-binding. Phosphorylated by ALK. Phosphorylated at Ser-265, Ser-302, Ser-632 and Ser-1100 by RPS6KB1; phosphorylation induces accelerated degradation of IRS1. Phosphorylated on tyrosine residues in response to insulin. In skeletal muscles, dephosphorylated on Tyr-608 by TNS2 under anabolic conditions; dephosphorylation results in the proteasomal degradation of IRS1. Ubiquitinated by the Cul7-RING(FBXW8) complex in a mTOR-dependent manner, leading to its degradation: the Cul7-RING(FBXW8) complex recognizes and binds IRS1 previously phosphorylated by S6 kinase (RPS6KB1 or RPS6KB2). Ubiquitinated by TRAF4 through 'Lys-29' linkage; this ubiquitination regulates the interaction of IRS1 with IGFR and IRS1 tyrosine phosphorylation upon IGF1 stimulation. In terms of processing, S-nitrosylation at by BLVRB inhibits its activity.

It localises to the cytoplasm. The protein resides in the nucleus. Signaling adapter protein that participates in the signal transduction from two prominent receptor tyrosine kinases, insulin receptor/INSR and insulin-like growth factor I receptor/IGF1R. Plays therefore an important role in development, growth, glucose homeostasis as well as lipid metabolism. Upon phosphorylation by the insulin receptor, functions as a signaling scaffold that propagates insulin action through binding to SH2 domain-containing proteins including the p85 regulatory subunit of PI3K, NCK1, NCK2, GRB2 or SHP2. Recruitment of GRB2 leads to the activation of the guanine nucleotide exchange factor SOS1 which in turn triggers the Ras/Raf/MEK/MAPK signaling cascade. Activation of the PI3K/AKT pathway is responsible for most of insulin metabolic effects in the cell, and the Ras/Raf/MEK/MAPK is involved in the regulation of gene expression and in cooperation with the PI3K pathway regulates cell growth and differentiation. Acts a positive regulator of the Wnt/beta-catenin signaling pathway through suppression of DVL2 autophagy-mediated degradation leading to cell proliferation. The polypeptide is Insulin receptor substrate 1 (Irs1) (Rattus norvegicus (Rat)).